Consider the following 392-residue polypeptide: Anhydro-N-acetylmuramic acid kinase (392 aa).

19-26 (GTSVDGID) provides a ligand contact to ATP.

Belongs to the anhydro-N-acetylmuramic acid kinase family.

The enzyme catalyses 1,6-anhydro-N-acetyl-beta-muramate + ATP + H2O = N-acetyl-D-muramate 6-phosphate + ADP + H(+). It participates in amino-sugar metabolism; 1,6-anhydro-N-acetylmuramate degradation. Its pathway is cell wall biogenesis; peptidoglycan recycling. Functionally, catalyzes the specific phosphorylation of 1,6-anhydro-N-acetylmuramic acid (anhMurNAc) with the simultaneous cleavage of the 1,6-anhydro ring, generating MurNAc-6-P. Is required for the utilization of anhMurNAc either imported from the medium or derived from its own cell wall murein, and thus plays a role in cell wall recycling. The sequence is that of Anhydro-N-acetylmuramic acid kinase from Trichormus variabilis (strain ATCC 29413 / PCC 7937) (Anabaena variabilis).